We begin with the raw amino-acid sequence, 181 residues long: Cyclic AMP-dependent transcription factor ATF-3 (181 aa).

Lys78 is covalently cross-linked (Glycyl lysine isopeptide (Lys-Gly) (interchain with G-Cter in SUMO2)). Positions 86-149 (DERKKRRRER…QHLIYMLNLH (64 aa)) constitute a bZIP domain. Positions 88-110 (RKKRRRERNKIAAAKCRNKKKEK) are basic motif. A leucine-zipper region spans residues 114-142 (LQKESEKLESVNAELKAQIEELKNEKQHL). A Phosphothreonine modification is found at Thr162. A Glycyl lysine isopeptide (Lys-Gly) (interchain with G-Cter in SUMO2) cross-link involves residue Lys175.

It belongs to the bZIP family. ATF subfamily. As to quaternary structure, binds DNA as a homodimer or a heterodimer. Interacts with KAT5; promoting KAT5 autoacetylation and KAT5 deubiquitination by USP7.

It is found in the nucleus. In terms of biological role, this protein binds the cAMP response element (CRE) (consensus: 5'-GTGACGT[AC][AG]-3'), a sequence present in many viral and cellular promoters. Represses transcription from promoters with ATF sites. It may repress transcription by stabilizing the binding of inhibitory cofactors at the promoter. Its function is as follows. Activates transcription presumably by sequestering inhibitory cofactors away from the promoters. Functionally, stress-induced isoform, counteracts the transcriptional repression of isoform 1. In Homo sapiens (Human), this protein is Cyclic AMP-dependent transcription factor ATF-3.